Reading from the N-terminus, the 403-residue chain is F-box only protein 22 (403 aa).

Position 1 is an N-acetylmethionine (M1). An F-box domain is found at 21-67 (FVLSNLAEVVERVLTFLPAKALLRVACVCRLWRECVRRVLRTHRSVT). T127 carries the post-translational modification Phosphothreonine. S128 carries the post-translational modification Phosphoserine. Residue K194 is modified to N6-acetyllysine.

As to quaternary structure, directly interacts with SKP1 and CUL1. Interacts (via C-terminal) with KDM4A. Interacts with TP53. Interacts with MTOR; this interaction promotes 'lys-27'-linked ubiquitination of MTOR. In terms of assembly, (Microbial infection) Interacts with SARS_COV-2 protein NSP5; this interaction attenuates NSP5-mediated inhibition of innate immunity. Phosphorylated by EIF2AK4 at Thr-127 causes cytoplasmic retention of FBXO22. Predominantly expressed in liver, also enriched in cardiac muscle.

It localises to the cytoplasm. The protein localises to the nucleus. Its subcellular location is the myofibril. It is found in the sarcomere. The protein resides in the z line. Substrate-recognition component of the SCF (SKP1-CUL1-F-box protein)-type E3 ubiquitin ligase complex that is implicated in the control of various cellular processes such as cell cycle control, transcriptional regulation, DNA damage repair, and apoptosis. Promotes the proteasome-dependent degradation of key sarcomeric proteins, such as alpha-actinin (ACTN2) and filamin-C (FLNC), essential for maintenance of normal contractile function. Acts as a key regulator of histone methylation marks namely H3K9 and H3K36 methylation through the regulation of histone demethylase KDM4A protein levels. In complex with KDM4A, also regulates the abundance of TP53 by targeting methylated TP53 for degradation at the late senescent stage. Under oxidative stress, promotes the ubiquitination and degradation of BACH1. Mechanistically, reactive oxygen species (ROS) covalently modify cysteine residues on the bZIP domain of BACH1, leading to its release from chromatin and making it accessible to FBXO22. Upon amino acid depletion, mediates 'Lys-27'-linked ubiquitination of MTOR and thereby inhibits substrate recruitment to mTORC1. Also inhibits SARS-CoV-2 replication by inducing NSP5 degradation. In Homo sapiens (Human), this protein is F-box only protein 22 (FBXO22).